Reading from the N-terminus, the 205-residue chain is Ribosomal RNA small subunit methyltransferase G (205 aa).

Residues Gly-71, Phe-76, 120–121, and Arg-134 contribute to the S-adenosyl-L-methionine site; that span reads IE.

This sequence belongs to the methyltransferase superfamily. RNA methyltransferase RsmG family.

Its subcellular location is the cytoplasm. The enzyme catalyses guanosine(527) in 16S rRNA + S-adenosyl-L-methionine = N(7)-methylguanosine(527) in 16S rRNA + S-adenosyl-L-homocysteine. In terms of biological role, specifically methylates the N7 position of guanine in position 527 of 16S rRNA. The polypeptide is Ribosomal RNA small subunit methyltransferase G (Paramagnetospirillum magneticum (strain ATCC 700264 / AMB-1) (Magnetospirillum magneticum)).